Reading from the N-terminus, the 56-residue chain is Alpha-pompilidotoxin (56 aa).

An N-terminal signal peptide occupies residues Met-1–Ala-22. The propeptide occupies Glu-23–Pro-42. Leu-55 is subject to Leucine amide.

Expressed by the venom gland.

It is found in the secreted. Functionally, inhibits sodium channels (Nav) inactivation. Shows two types of inhibitory activities on channels. Inhibition of hNav1.6/SCN8A shows a large increase in the steady-state current component without any increase in the slow component, whereas inhibition of hNav1.1/SCN1A, hNav1.2/SCN2A, hNav1.3/SCN3A and hNav1.7/SCN9A shows a large increase in the slow component with only a small steady-state component. Is 5-fold less potent than beta-PMTX for inducing repetitive action potentials in lobster neuromuscular junctions. The sequence is that of Alpha-pompilidotoxin from Anoplius samariensis (Solitary wasp).